Reading from the N-terminus, the 1150-residue chain is PAN2-PAN3 deadenylation complex catalytic subunit pan2 (1150 aa).

2 WD repeats span residues 96–139 (AHEE…DKLH) and 270–309 (ANVS…HFNE). The linker stretch occupies residues 310–446 (MSKEAEFGDV…GAKINGETDD (137 aa)). A USP domain is found at 447–816 (DPLLKYSNVE…IPCVLAYQVQ (370 aa)). The Exonuclease domain occupies 865 to 1043 (VALDTEFVDL…IEDARMALRL (179 aa)). A divalent metal cation is bound by residues aspartate 868, glutamate 870, aspartate 977, and aspartate 1036. Positions 1074–1150 (PPPRNGVPTV…GDFFSGSPLK (77 aa)) are disordered. Residues 1091-1106 (VTMQNNSGRNTPSTSD) show a composition bias toward polar residues. Positions 1108-1120 (AGAAASAPATPRQ) are enriched in low complexity.

This sequence belongs to the peptidase C19 family. PAN2 subfamily. As to quaternary structure, forms a heterotrimer with an asymmetric homodimer of the regulatory subunit pan3 to form the poly(A)-nuclease (PAN) deadenylation complex. A divalent metal cation serves as cofactor.

The protein resides in the cytoplasm. The catalysed reaction is Exonucleolytic cleavage of poly(A) to 5'-AMP.. With respect to regulation, positively regulated by the regulatory subunit pan3. Functionally, catalytic subunit of the poly(A)-nuclease (PAN) deadenylation complex, one of two cytoplasmic mRNA deadenylases involved in mRNA turnover. PAN specifically shortens poly(A) tails of RNA and the activity is stimulated by poly(A)-binding protein pab1. PAN deadenylation is followed by rapid degradation of the shortened mRNA tails by the CCR4-NOT complex. Deadenylated mRNAs are then degraded by two alternative mechanisms, namely exosome-mediated 3'-5' exonucleolytic degradation, or deadenylation-dependent mRNA decaping and subsequent 5'-3' exonucleolytic degradation by xrn1. May also be involved in post-transcriptional maturation of mRNA poly(A) tails. The protein is PAN2-PAN3 deadenylation complex catalytic subunit pan2 of Aspergillus niger (strain ATCC MYA-4892 / CBS 513.88 / FGSC A1513).